A 155-amino-acid polypeptide reads, in one-letter code: Ribosome maturation factor RimP (155 aa).

This sequence belongs to the RimP family.

The protein localises to the cytoplasm. Its function is as follows. Required for maturation of 30S ribosomal subunits. This is Ribosome maturation factor RimP from Listeria monocytogenes serotype 4b (strain CLIP80459).